The primary structure comprises 104 residues: N(4)-acetylcytidine amidohydrolase (104 aa).

The 87-residue stretch at 7-93 folds into the ASCH domain; that stretch reads MTFFSRFEAD…EVIQEIYPGI (87 aa). K22 acts as the Proton acceptor in catalysis. T25 serves as the catalytic Nucleophile. The active-site Proton donor is the E75.

It belongs to the N(4)-acetylcytidine amidohydrolase family.

The catalysed reaction is N(4)-acetylcytidine + H2O = cytidine + acetate + H(+). The enzyme catalyses N(4)-acetyl-2'-deoxycytidine + H2O = 2'-deoxycytidine + acetate + H(+). It carries out the reaction N(4)-acetylcytosine + H2O = cytosine + acetate + H(+). In terms of biological role, catalyzes the hydrolysis of N(4)-acetylcytidine (ac4C). The protein is N(4)-acetylcytidine amidohydrolase of Vibrio vulnificus (strain CMCP6).